Consider the following 439-residue polypeptide: Mitochondrial distribution and morphology protein 12 (439 aa).

One can recognise an SMP-LTD domain in the interval 1-439 (MSIDVNWRFA…VYPSFWTFLI (439 aa)). Disordered stretches follow at residues 70 to 103 (YEEDDDDHTSDASEERGEEHSSRWNSTHPELNEP), 185 to 274 (GWSD…PPRM), and 354 to 386 (PEQQQQRESAGDDHRPQSRPDSSASASQKRHGG). Basic and acidic residues predominate over residues 78 to 91 (TSDASEERGEEHSS). Residues 215–245 (DTSNSTSRPSTANTLPSHPSGSSKNSGQAAT) are compositionally biased toward polar residues. Composition is skewed to basic and acidic residues over residues 247–261 (RNDHPSLHAGEHLED) and 362–371 (SAGDDHRPQS).

Belongs to the MDM12 family. Component of the ER-mitochondria encounter structure (ERMES) or MDM complex, composed of mmm1, mdm10, mdm12 and mdm34. A mmm1 homodimer associates with one molecule of mdm12 on each side in a pairwise head-to-tail manner, and the SMP-LTD domains of mmm1 and mdm12 generate a continuous hydrophobic tunnel for phospholipid trafficking.

The protein localises to the mitochondrion outer membrane. Its subcellular location is the endoplasmic reticulum membrane. Component of the ERMES/MDM complex, which serves as a molecular tether to connect the endoplasmic reticulum (ER) and mitochondria. Components of this complex are involved in the control of mitochondrial shape and protein biogenesis, and function in nonvesicular lipid trafficking between the ER and mitochondria. Mdm12 is required for the interaction of the ER-resident membrane protein mmm1 and the outer mitochondrial membrane-resident beta-barrel protein mdm10. The mdm12-mmm1 subcomplex functions in the major beta-barrel assembly pathway that is responsible for biogenesis of all mitochondrial outer membrane beta-barrel proteins, and acts in a late step after the SAM complex. The mdm10-mdm12-mmm1 subcomplex further acts in the TOM40-specific pathway after the action of the mdm12-mmm1 complex. Essential for establishing and maintaining the structure of mitochondria and maintenance of mtDNA nucleoids. The chain is Mitochondrial distribution and morphology protein 12 from Aspergillus fumigatus (strain CBS 144.89 / FGSC A1163 / CEA10) (Neosartorya fumigata).